We begin with the raw amino-acid sequence, 292 residues long: Potassium channel, subfamily K, member 16 (292 aa).

Over 1 to 13 the chain is Cytoplasmic; sequence MPRAGVCGCWGGQ. The chain crosses the membrane as a helical span at residues 14–34; that stretch reads VLPLLLAYICYLLLGATIFQL. Residues 98–116 constitute an intramembrane region (pore-forming); that stretch reads SFFFAGTVVTTIGYGNLAP. The K(+) site is built by T108, I109, G110, and Y111. Positions 108-113 are selectivity filter 1; sequence TIGYGN. The helical transmembrane segment at 120-140 threads the bilayer; the sequence is AGQVFCVFYALMGIPLNVVFL. Residues 141-165 are Cytoplasmic-facing; the sequence is NHLGTGLRAHLTTLDRWEDHPRHSQ. Residues 166 to 186 traverse the membrane as a helical segment; it reads LLQVLGLALFLTLGTLVILIF. An intramembrane region (pore-forming) is located at residues 202-221; that stretch reads GFYFAFITLSTIGFGDYVVG. Residues T212, I213, G214, and F215 each contribute to the K(+) site. A selectivity filter 2 region spans residues 212 to 217; sequence TIGFGD. A helical membrane pass occupies residues 238–258; sequence IWILLGLAWLAVVLSLGSLLL. Over 259–292 the chain is Cytoplasmic; the sequence is HRCSRLWQLIRGLDLKDGAAPDSEPRSQKIPISA.

Belongs to the two pore domain potassium channel (TC 1.A.1.8) family. As to quaternary structure, homodimer; disulfide-linked. Heterodimer with KCNK17 and KCNK5. Expressed in pacreatic beta-cells (at protein level). Expressed in pacreatic delta-cells (at protein level).

The protein resides in the cell membrane. It localises to the endoplasmic reticulum membrane. Its subcellular location is the mitochondrion inner membrane. The catalysed reaction is K(+)(in) = K(+)(out). It catalyses the reaction Rb(+)(in) = Rb(+)(out). It carries out the reaction Cs(+)(in) = Cs(+)(out). K(+) channel that conducts voltage-dependent outward rectifying currents upon membrane depolarization. Voltage sensing is coupled to K(+) electrochemical gradient in an 'ion flux gating' mode where outward but not inward ion flow opens the gate. Homo- and heterodimerizes to form functional channels with distinct regulatory and gating properties. In pancreatic islets, conducts K(+) countercurrents for Ca(2+) release from the endoplasmic reticulum (ER) and regulates the frequency and duration of cytosolic Ca(2+) oscillations coupled to secretion of pancreatic hormones. In pancreatic beta cells, drives ER Ca(2+) efflux, which in turn activates Ca(2+)-dependent plasma membrane K(+) slow currents and cytosolic Ca(2+) influx, overall contributing to synchronous cytosolic Ca(2+) oscillations. Limits glucose-induced cytosolic Ca(2+) oscillations coupled to second-phase INS secretion. Contributes to beta cell adaptation to acute inflammation by maintaining normal cytosolic Ca(2+) levels and INS secretion. May regulate beta cell mitochondrial Ca(2+) levels either indirectly via ER Ca(2+) efflux or directly by hyperpolarizing the mitochondrial membrane potential. Limits mitochondrial Ca(2+) oscillations and ATP production involved in glucose homeostasis upon metabolic stress. In pancreatic delta cells, limits Ca(2+)-induced Ca(2+)-release involved in somatostatin secretion and modulates islet paracrine signaling involved in glucagon secretion. Permeable to other monovalent cations such as Rb(+) and Cs(+). The sequence is that of Potassium channel, subfamily K, member 16 from Mus musculus (Mouse).